The primary structure comprises 365 residues: Chorismate synthase (365 aa).

Residue Arg48 participates in NADP(+) binding. Residues 125–127 (RSS), 238–239 (NA), Gly278, 293–297 (KPTSS), and Arg319 contribute to the FMN site.

The protein belongs to the chorismate synthase family. As to quaternary structure, homotetramer. It depends on FMNH2 as a cofactor.

It carries out the reaction 5-O-(1-carboxyvinyl)-3-phosphoshikimate = chorismate + phosphate. It functions in the pathway metabolic intermediate biosynthesis; chorismate biosynthesis; chorismate from D-erythrose 4-phosphate and phosphoenolpyruvate: step 7/7. Functionally, catalyzes the anti-1,4-elimination of the C-3 phosphate and the C-6 proR hydrogen from 5-enolpyruvylshikimate-3-phosphate (EPSP) to yield chorismate, which is the branch point compound that serves as the starting substrate for the three terminal pathways of aromatic amino acid biosynthesis. This reaction introduces a second double bond into the aromatic ring system. The protein is Chorismate synthase of Marinomonas sp. (strain MWYL1).